The sequence spans 326 residues: Large ribosomal subunit protein uL4 (326 aa).

Positions 1–211 (MASCVVKNWQ…EKLKARWGSG (211 aa)) are large ribosomal subunit protein uL4. Disordered regions lie at residues 44–76 (ARQG…ARAG) and 211–326 (GAAA…EDND). The segment covering 60–71 (GGRKPWRQKGTG) has biased composition (basic residues). Positions 212-326 (AAAAAPTQAD…TAAAEEEDND (115 aa)) are unknown. Over residues 221-238 (DRLEDQAQAAEREARPVE) the composition is skewed to basic and acidic residues. Composition is skewed to low complexity over residues 252 to 279 (EAQA…QVQE) and 294 to 312 (QGQA…PPAG). The segment covering 313–326 (EEAETAAAEEEDND) has biased composition (acidic residues).

The protein belongs to the universal ribosomal protein uL4 family. As to quaternary structure, part of the 50S ribosomal subunit.

In terms of biological role, one of the primary rRNA binding proteins, this protein initially binds near the 5'-end of the 23S rRNA. It is important during the early stages of 50S assembly. It makes multiple contacts with different domains of the 23S rRNA in the assembled 50S subunit and ribosome. Forms part of the polypeptide exit tunnel. This chain is Large ribosomal subunit protein uL4, found in Synechococcus sp. (strain JA-3-3Ab) (Cyanobacteria bacterium Yellowstone A-Prime).